Here is a 325-residue protein sequence, read N- to C-terminus: Ribosomal RNA small subunit methyltransferase H (325 aa).

The disordered stretch occupies residues 1 to 28 (MTASQPLDQADQDSESSSAGSSAAETEH). Low complexity predominate over residues 15-24 (ESSSAGSSAA). S-adenosyl-L-methionine contacts are provided by residues 56–58 (GGH), aspartate 82, tyrosine 110, aspartate 131, and glutamine 138. A disordered region spans residues 303–325 (TDEEVQANPRSRSAKLRVAKRVE). Residues 314-325 (RSAKLRVAKRVE) show a composition bias toward basic residues.

The protein belongs to the methyltransferase superfamily. RsmH family.

Its subcellular location is the cytoplasm. It carries out the reaction cytidine(1402) in 16S rRNA + S-adenosyl-L-methionine = N(4)-methylcytidine(1402) in 16S rRNA + S-adenosyl-L-homocysteine + H(+). Functionally, specifically methylates the N4 position of cytidine in position 1402 (C1402) of 16S rRNA. This is Ribosomal RNA small subunit methyltransferase H from Rhodopirellula baltica (strain DSM 10527 / NCIMB 13988 / SH1).